The following is a 258-amino-acid chain: 5-oxoprolinase subunit A (258 aa).

It belongs to the LamB/PxpA family. In terms of assembly, forms a complex composed of PxpA, PxpB and PxpC.

It carries out the reaction 5-oxo-L-proline + ATP + 2 H2O = L-glutamate + ADP + phosphate + H(+). In terms of biological role, catalyzes the cleavage of 5-oxoproline to form L-glutamate coupled to the hydrolysis of ATP to ADP and inorganic phosphate. This is 5-oxoprolinase subunit A from Corynebacterium jeikeium (strain K411).